The primary structure comprises 480 residues: Glutamate--tRNA ligase (480 aa).

Residues 9–19 (PSPTGDPHVGT) carry the 'HIGH' region motif. A 'KMSKS' region motif is present at residues 253-257 (KISKR). Residue Lys256 coordinates ATP.

Belongs to the class-I aminoacyl-tRNA synthetase family. Glutamate--tRNA ligase type 1 subfamily. Monomer.

Its subcellular location is the cytoplasm. The enzyme catalyses tRNA(Glu) + L-glutamate + ATP = L-glutamyl-tRNA(Glu) + AMP + diphosphate. Its function is as follows. Catalyzes the attachment of glutamate to tRNA(Glu) in a two-step reaction: glutamate is first activated by ATP to form Glu-AMP and then transferred to the acceptor end of tRNA(Glu). In Deinococcus geothermalis (strain DSM 11300 / CIP 105573 / AG-3a), this protein is Glutamate--tRNA ligase.